The following is a 609-amino-acid chain: Neutral protease (609 aa).

Residues 1-24 (MNKTQRHINWLLAVSAATALPVTA) form the signal peptide. A propeptide spanning residues 25 to 196 (AEMINVNDGS…VLQTWDGLNH (172 aa)) is cleaved from the precursor. H343 is a Zn(2+) binding site. E344 is a catalytic residue. Positions 347 and 367 each coordinate Zn(2+). Catalysis depends on H426, which acts as the Proton donor.

This sequence belongs to the peptidase M4 family. It depends on Zn(2+) as a cofactor.

It is found in the secreted. It catalyses the reaction Preferential cleavage of bonds with bulky hydrophobic groups in P2 and P1'. Phe at P1' is the most favored residue, which distinguished this enzyme from thermolysin.. Its function is as follows. Extracellular zinc metalloprotease. The sequence is that of Neutral protease (nprV) from Vibrio proteolyticus (Aeromonas proteolytica).